A 553-amino-acid polypeptide reads, in one-letter code: ATP synthase F(1) complex subunit alpha, mitochondrial (553 aa).

Residues M1–L43 constitute a mitochondrion transit peptide. A phosphoserine mark is found at S53 and S65. S76 is subject to Phosphoserine; alternate. Residue S76 is glycosylated (O-linked (GlcNAc) serine; alternate). A Phosphoserine modification is found at S106. N6-acetyllysine occurs at positions 123, 126, and 132. T134 carries the phosphothreonine modification. Position 161 is an N6-acetyllysine; alternate (K161). K161 is subject to N6-succinyllysine; alternate. The residue at position 166 (S166) is a Phosphoserine. K167 carries the post-translational modification N6-acetyllysine; alternate. An N6-succinyllysine; alternate modification is found at K167. At S184 the chain carries Phosphoserine. Omega-N-methylarginine is present on R204. Q215, G217, K218, T219, and S220 together coordinate ATP. Residue T219 participates in Mg(2+) binding. 2 positions are modified to N6-acetyllysine; alternate: K230 and K239. K230 and K239 each carry N6-succinyllysine; alternate. K240 is modified (N6-acetyllysine). Residues K261 and K305 each carry the N6-acetyllysine; alternate modification. N6-succinyllysine; alternate occurs at positions 261 and 305. Residue D312 coordinates Mg(2+). N6-acetyllysine; alternate is present on K427. Residue K427 is modified to N6-succinyllysine; alternate. N6-acetyllysine is present on K434. 2 residues coordinate ATP: Q473 and Q475. An N6-acetyllysine; alternate mark is found at K498 and K506. 2 positions are modified to N6-succinyllysine; alternate: K498 and K506. The residue at position 521 (S521) is a Phosphoserine. 2 positions are modified to N6-acetyllysine; alternate: K531 and K539. N6-succinyllysine; alternate occurs at positions 531 and 539. K541 carries the N6-acetyllysine modification.

This sequence belongs to the ATPase alpha/beta chains family. In terms of assembly, homotrimer. Component of the ATP synthase complex composed at least of ATP5F1A/subunit alpha, ATP5F1B/subunit beta, ATP5MC1/subunit c (homooctomer), MT-ATP6/subunit a, MT-ATP8/subunit 8, ATP5ME/subunit e, ATP5MF/subunit f, ATP5MG/subunit g, ATP5MK/subunit k, ATP5MJ/subunit j, ATP5F1C/subunit gamma, ATP5F1D/subunit delta, ATP5F1E/subunit epsilon, ATP5PF/subunit F6, ATP5PB/subunit b, ATP5PD/subunit d, ATP5PO/subunit OSCP. ATP synthase complex consists of a soluble F(1) head domain (subunits alpha(3) and beta(3)) - the catalytic core - and a membrane F(0) domain - the membrane proton channel (subunits c, a, 8, e, f, g, k and j). These two domains are linked by a central stalk (subunits gamma, delta, and epsilon) rotating inside the F1 region and a stationary peripheral stalk (subunits F6, b, d, and OSCP). Interacts with ATPAF2. Interacts with HRG; the interaction occurs on the surface of T-cells and alters the cell morphology when associated with concanavalin (in vitro). Interacts with PLG (angiostatin peptide); the interaction inhibits most of the angiogenic properties of angiostatin. Interacts with BLOC1S1. Interacts with BCL2L1 isoform BCL-X(L); the interaction mediates the association of BCL2L1 isoform BCL-X(L) with the mitochondrial membrane F(1)F(0) ATP synthase and enhances neurons metabolic efficiency. Interacts with CLN5 and PPT1. Interacts with S100A1; this interaction increases F1-ATPase activity. Interacts with ABCB7; this interaction allows the regulation of cellular iron homeostasis and cellular reactive oxygen species (ROS) levels in cardiomyocytes. Post-translationally, acetylated on lysine residues. BLOC1S1 is required for acetylation. Acetylation of Lys-132, Lys-230 and Lys-498 is observed in liver mitochondria from fasted mice but not from fed mice.

The protein resides in the mitochondrion inner membrane. It is found in the cell membrane. Its function is as follows. Subunit alpha, of the mitochondrial membrane ATP synthase complex (F(1)F(0) ATP synthase or Complex V) that produces ATP from ADP in the presence of a proton gradient across the membrane which is generated by electron transport complexes of the respiratory chain. ATP synthase complex consist of a soluble F(1) head domain - the catalytic core - and a membrane F(1) domain - the membrane proton channel. These two domains are linked by a central stalk rotating inside the F(1) region and a stationary peripheral stalk. During catalysis, ATP synthesis in the catalytic domain of F(1) is coupled via a rotary mechanism of the central stalk subunits to proton translocation. In vivo, can only synthesize ATP although its ATP hydrolase activity can be activated artificially in vitro. With the catalytic subunit beta (ATP5F1B), forms the catalytic core in the F(1) domain. Subunit alpha does not bear the catalytic high-affinity ATP-binding sites. The protein is ATP synthase F(1) complex subunit alpha, mitochondrial of Mus musculus (Mouse).